The sequence spans 249 residues: Tetraspanin-18 (249 aa).

At 1–13 (MEGDCLSCMKYLM) the chain is on the cytoplasmic side. Residues 14–34 (FVFNFFIFLGGACLLGIGIWV) form a helical membrane-spanning segment. Residues 35–49 (MVDPTGFREIVAANP) lie on the Extracellular side of the membrane. The chain crosses the membrane as a helical span at residues 50 to 70 (LLITGAYILLAMGGLLFLLGF). Topologically, residues 71–83 (LGCCGAVRENKCL) are cytoplasmic. Residues 84–104 (LLFFFLFILIIFLAELSAAIL) form a helical membrane-spanning segment. Topologically, residues 105-223 (AFIFRGNLTR…AFETYVYLAG (119 aa)) are extracellular. N-linked (GlcNAc...) asparagine glycosylation is found at N111 and N129. Residues 224 to 244 (ALAIGVLAIELFAMIFAMCLF) form a helical membrane-spanning segment. Residues 245–249 (RGIIQ) are Cytoplasmic-facing.

The protein belongs to the tetraspanin (TM4SF) family. Interacts with ORAI1; this interaction regulates ORAI1 exit from the endoplasmic (ER), and/or Golgi, and trafficking to the cell surface.

The protein resides in the membrane. Functionally, plays a role in the cell surface localization of ORAI1 and may participate in the regulation of Ca(2+) signaling and the VWF release in response to inflammatory stimuli. The sequence is that of Tetraspanin-18 from Bos taurus (Bovine).